Consider the following 102-residue polypeptide: CRISPR-associated endoribonuclease Cas2 1 (102 aa).

Mg(2+) is bound at residue Asp-17.

This sequence belongs to the CRISPR-associated endoribonuclease Cas2 protein family. Homodimer, forms a heterotetramer with a Cas1 homodimer. Mg(2+) is required as a cofactor.

Its function is as follows. CRISPR (clustered regularly interspaced short palindromic repeat), is an adaptive immune system that provides protection against mobile genetic elements (viruses, transposable elements and conjugative plasmids). CRISPR clusters contain sequences complementary to antecedent mobile elements and target invading nucleic acids. CRISPR clusters are transcribed and processed into CRISPR RNA (crRNA). Functions as a ssRNA-specific endoribonuclease. Involved in the integration of spacer DNA into the CRISPR cassette. The sequence is that of CRISPR-associated endoribonuclease Cas2 1 from Rhodospirillum rubrum (strain ATCC 11170 / ATH 1.1.1 / DSM 467 / LMG 4362 / NCIMB 8255 / S1).